Reading from the N-terminus, the 585-residue chain is Adenine deaminase (585 aa).

This sequence belongs to the metallo-dependent hydrolases superfamily. Adenine deaminase family. Requires Mn(2+) as cofactor.

The catalysed reaction is adenine + H2O + H(+) = hypoxanthine + NH4(+). The polypeptide is Adenine deaminase (Halalkalibacterium halodurans (strain ATCC BAA-125 / DSM 18197 / FERM 7344 / JCM 9153 / C-125) (Bacillus halodurans)).